A 226-amino-acid chain; its full sequence is N-(5'-phosphoribosyl)anthranilate isomerase (226 aa).

Belongs to the TrpF family.

It catalyses the reaction N-(5-phospho-beta-D-ribosyl)anthranilate = 1-(2-carboxyphenylamino)-1-deoxy-D-ribulose 5-phosphate. It functions in the pathway amino-acid biosynthesis; L-tryptophan biosynthesis; L-tryptophan from chorismate: step 3/5. The chain is N-(5'-phosphoribosyl)anthranilate isomerase (TRP1) from Candida albicans (strain SC5314 / ATCC MYA-2876) (Yeast).